The chain runs to 530 residues: Ubiquitin carboxyl-terminal hydrolase 17-like protein 11 (530 aa).

A USP domain is found at 80 to 375 (AGLQNMGNTC…QAYVLFYIQK (296 aa)). Residue Cys89 is the Nucleophile of the active site. His334 functions as the Proton acceptor in the catalytic mechanism. Basic and acidic residues-rich tracts occupy residues 382–392 (SESVSRGREPR) and 398–413 (DTDR…RDHP). Disordered regions lie at residues 382–413 (SESV…RDHP) and 509–530 (RGRA…LVCQ). Residues 510–524 (GRARRSKGKNKHSKR) are compositionally biased toward basic residues.

The protein belongs to the peptidase C19 family. USP17 subfamily.

Its subcellular location is the nucleus. It localises to the endoplasmic reticulum. The enzyme catalyses Thiol-dependent hydrolysis of ester, thioester, amide, peptide and isopeptide bonds formed by the C-terminal Gly of ubiquitin (a 76-residue protein attached to proteins as an intracellular targeting signal).. Functionally, deubiquitinating enzyme that removes conjugated ubiquitin from specific proteins to regulate different cellular processes that may include cell proliferation, progression through the cell cycle, apoptosis, cell migration, and the cellular response to viral infection. The polypeptide is Ubiquitin carboxyl-terminal hydrolase 17-like protein 11 (USP17L11) (Homo sapiens (Human)).